We begin with the raw amino-acid sequence, 238 residues long: 1-(5-phosphoribosyl)-5-[(5-phosphoribosylamino)methylideneamino] imidazole-4-carboxamide isomerase (238 aa).

The active-site Proton acceptor is Asp-8. Asp-129 serves as the catalytic Proton donor.

The protein belongs to the HisA/HisF family.

It is found in the cytoplasm. It carries out the reaction 1-(5-phospho-beta-D-ribosyl)-5-[(5-phospho-beta-D-ribosylamino)methylideneamino]imidazole-4-carboxamide = 5-[(5-phospho-1-deoxy-D-ribulos-1-ylimino)methylamino]-1-(5-phospho-beta-D-ribosyl)imidazole-4-carboxamide. Its pathway is amino-acid biosynthesis; L-histidine biosynthesis; L-histidine from 5-phospho-alpha-D-ribose 1-diphosphate: step 4/9. This chain is 1-(5-phosphoribosyl)-5-[(5-phosphoribosylamino)methylideneamino] imidazole-4-carboxamide isomerase, found in Anaeromyxobacter sp. (strain Fw109-5).